An 83-amino-acid polypeptide reads, in one-letter code: MKASMFLALAGLVLLFVVGYASESEEKEFPIELLSKIFAVDVFKGEERGCKGFGDSCTPGKNECCPNHACSNKHKWCKAYLGK.

Positions 1–21 (MKASMFLALAGLVLLFVVGYA) are cleaved as a signal peptide. Residues 22-48 (SESEEKEFPIELLSKIFAVDVFKGEER) constitute a propeptide that is removed on maturation. Disulfide bonds link cysteine 50-cysteine 65, cysteine 57-cysteine 70, and cysteine 64-cysteine 77. Position 81 is a leucine amide (leucine 81).

It belongs to the neurotoxin 10 (Hwtx-1) family. 15 (Hntx-3) subfamily. In terms of assembly, monomer. Expressed by the venom gland.

Its subcellular location is the secreted. Functionally, lethal neurotoxin. Selectively blocks tetrodotoxin-sensitive voltage-gated sodium channels (Nav). Does not affect tetrodotoxin-resistant voltage-gated sodium channels or calcium channels. This is Mu-theraphotoxin-Hhn2o from Cyriopagopus hainanus (Chinese bird spider).